A 154-amino-acid chain; its full sequence is Putative pre-16S rRNA nuclease (154 aa).

Belongs to the YqgF nuclease family.

The protein resides in the cytoplasm. Its function is as follows. Could be a nuclease involved in processing of the 5'-end of pre-16S rRNA. This Rickettsia peacockii (strain Rustic) protein is Putative pre-16S rRNA nuclease.